Consider the following 543-residue polypeptide: Chaperonin GroEL (543 aa).

ATP contacts are provided by residues 29–32, Lys50, 86–90, Gly415, and Asp495; these read TLGP and DGTTT.

It belongs to the chaperonin (HSP60) family. Forms a cylinder of 14 subunits composed of two heptameric rings stacked back-to-back. Interacts with the co-chaperonin GroES.

It is found in the cytoplasm. The enzyme catalyses ATP + H2O + a folded polypeptide = ADP + phosphate + an unfolded polypeptide.. Together with its co-chaperonin GroES, plays an essential role in assisting protein folding. The GroEL-GroES system forms a nano-cage that allows encapsulation of the non-native substrate proteins and provides a physical environment optimized to promote and accelerate protein folding. The sequence is that of Chaperonin GroEL from Karelsulcia muelleri (strain GWSS) (Sulcia muelleri).